We begin with the raw amino-acid sequence, 215 residues long: Adenylate kinase (215 aa).

Residue 10–15 participates in ATP binding; the sequence is GAGKGT. An NMP region spans residues 30 to 59; sequence STGDMLRSAIKSGSELGKKAKQVMDAGQLV. AMP is bound by residues threonine 31, arginine 36, 57 to 59, 85 to 88, and glutamine 92; these read QLV and GFPR. Residues 122-159 form an LID region; sequence GRRVHPGSGRVYHVEHNPPKVEGKDDETGEDLVVRPDD. ATP-binding positions include arginine 123 and 132–133; that span reads VY. Residues 128-151 form a disordered region; that stretch reads GSGRVYHVEHNPPKVEGKDDETGE. Residues 133–144 show a composition bias toward basic and acidic residues; sequence YHVEHNPPKVEG. AMP is bound by residues arginine 156 and arginine 167. Positions 195–215 are disordered; it reads KIDGTQPVERVSEQLGDLLRK. Glutamine 200 is an ATP binding site.

The protein belongs to the adenylate kinase family. In terms of assembly, monomer.

It is found in the cytoplasm. It carries out the reaction AMP + ATP = 2 ADP. It participates in purine metabolism; AMP biosynthesis via salvage pathway; AMP from ADP: step 1/1. In terms of biological role, catalyzes the reversible transfer of the terminal phosphate group between ATP and AMP. Plays an important role in cellular energy homeostasis and in adenine nucleotide metabolism. This is Adenylate kinase from Idiomarina loihiensis (strain ATCC BAA-735 / DSM 15497 / L2-TR).